We begin with the raw amino-acid sequence, 291 residues long: Potassium-transporting ATPase subunit beta (291 aa).

The Cytoplasmic segment spans residues 1 to 36 (MAALQEKKTCGQRMEEFQRYCWNPDTGQMLGRTLSR). A helical; Signal-anchor for type II membrane protein transmembrane segment spans residues 37–57 (WVWISLYYVAFYVVMTGLFAL). Residues 58–291 (CLYVLMQTVD…KVEFKLKIEK (234 aa)) lie on the Extracellular side of the membrane. N-linked (GlcNAc...) asparagine glycans are attached at residues Asn-99, Asn-103, Asn-130, Asn-146, and Asn-161. Cys-131 and Cys-152 are joined by a disulfide. A disulfide bridge connects residues Cys-162 and Cys-178. 2 N-linked (GlcNAc...) asparagine glycosylation sites follow: Asn-193 and Asn-222. The segment at 194-291 (GSAPRVDCAF…KVEFKLKIEK (98 aa)) is immunoglobulin-like. Cys-201 and Cys-263 are joined by a disulfide.

It belongs to the X(+)/potassium ATPases subunit beta family. As to quaternary structure, the ATPase pump is composed of two subunits: alpha (catalytic) and beta (regulatory). Interacts with alpha subunit ATP12A; this interaction is required for the formation of a functionally active pump and targeting at the plasma membrane. Interacts (via N-terminus) with alpha subunit ATP4A (via the P-domain). In terms of processing, N-glycosylation is necessary for assembly and functional expression of the pump at the plasma membrane.

The protein localises to the apical cell membrane. It localises to the cell membrane. Functionally, the beta subunit of the gastric H(+)/K(+) ATPase pump which transports H(+) ions in exchange for K(+) ions across the apical membrane of parietal cells. Plays a structural and regulatory role in the assembly and membrane targeting of a functionally active pump. Within a transport cycle, the transfer of a H(+) ion across the membrane is coupled to ATP hydrolysis and is associated with a transient phosphorylation of the alpha subunit that shifts the pump conformation from inward-facing (E1) to outward-facing state (E2). Interacts with the phosphorylation domain of the alpha subunit and functions as a ratchet, stabilizing the lumenal-open E2 conformation and preventing the reverse reaction of the transport cycle. The protein is Potassium-transporting ATPase subunit beta of Homo sapiens (Human).